Consider the following 714-residue polypeptide: Fatty acid oxidation complex subunit alpha (714 aa).

Residues Met-1–Pro-190 are enoyl-CoA hydratase. A 3-hydroxyacyl-CoA dehydrogenase region spans residues Ala-306 to Gln-714.

This sequence in the N-terminal section; belongs to the enoyl-CoA hydratase/isomerase family. The protein in the central section; belongs to the 3-hydroxyacyl-CoA dehydrogenase family. As to quaternary structure, heterotetramer of two alpha chains (FadJ) and two beta chains (FadI).

The protein localises to the cytoplasm. It catalyses the reaction a (3S)-3-hydroxyacyl-CoA = a (2E)-enoyl-CoA + H2O. The catalysed reaction is a 4-saturated-(3S)-3-hydroxyacyl-CoA = a (3E)-enoyl-CoA + H2O. It carries out the reaction a (3S)-3-hydroxyacyl-CoA + NAD(+) = a 3-oxoacyl-CoA + NADH + H(+). The enzyme catalyses (3S)-3-hydroxybutanoyl-CoA = (3R)-3-hydroxybutanoyl-CoA. It participates in lipid metabolism; fatty acid beta-oxidation. Catalyzes the formation of a hydroxyacyl-CoA by addition of water on enoyl-CoA. Also exhibits 3-hydroxyacyl-CoA epimerase and 3-hydroxyacyl-CoA dehydrogenase activities. This is Fatty acid oxidation complex subunit alpha from Escherichia coli (strain 55989 / EAEC).